The following is a 398-amino-acid chain: MLYICNKRRLFMSNYLFTSESVSEGHPDKVADQISDAILDAILEQDPQARVACETLVTTGMALIAGEITTSAWVDMPEVVRNTIKEIGYNSSEMGFDWQSCAVMTTIDKQSPDIAQGVNEGAGIDLDQGAGDQGLMFGYASNETDVLMPMPITLAHRLTRRQAQVRKSSILPWLRPDAKSQVTIEYENKIPKRIDAVVLSTQHDESISYNDLKEAVMEEIIKPTLPADMIDANTKFFINPTGRFVIGGPVGDCGLTGRKIIVDTYGGKALHGGGAFSGKDPSKVDRSSAYYGRYVAKNLVAAGIASELQIQVAYAIGIAQPVSINVNSFGTGRISDAAIKELILGNFDLRPKAIVQQLDLLRPIYRQTAAYGHFGRSDVEFPWERTDKIEELKSAAGL.

Position 26 (His-26) interacts with ATP. A Mg(2+)-binding site is contributed by Asp-28. Residue Glu-54 coordinates K(+). Residues Glu-67 and Gln-110 each contribute to the L-methionine site. The interval 110–120 (QSPDIAQGVNE) is flexible loop. Residues 177–179 (DAK), 243–244 (RF), Asp-252, 258–259 (RK), Ala-275, and Lys-279 contribute to the ATP site. An L-methionine-binding site is contributed by Asp-252. Lys-283 provides a ligand contact to L-methionine.

The protein belongs to the AdoMet synthase family. In terms of assembly, homotetramer; dimer of dimers. Requires Mg(2+) as cofactor. It depends on K(+) as a cofactor.

The protein localises to the cytoplasm. It carries out the reaction L-methionine + ATP + H2O = S-adenosyl-L-methionine + phosphate + diphosphate. The protein operates within amino-acid biosynthesis; S-adenosyl-L-methionine biosynthesis; S-adenosyl-L-methionine from L-methionine: step 1/1. In terms of biological role, catalyzes the formation of S-adenosylmethionine (AdoMet) from methionine and ATP. The overall synthetic reaction is composed of two sequential steps, AdoMet formation and the subsequent tripolyphosphate hydrolysis which occurs prior to release of AdoMet from the enzyme. The protein is S-adenosylmethionine synthase of Desulfotalea psychrophila (strain LSv54 / DSM 12343).